The following is an 89-amino-acid chain: Repressor protein (89 aa).

Residues 29-52 (SGDIARNTGYSRRRISDRCTVLVD) constitute a DNA-binding region (H-T-H motif).

In terms of biological role, transcriptional repressor expressed under lysogenic conditions, which specifically binds the host DNA site 'RRGAAG'. The binding occurs cooperatively, probably as 2 copies of a dimer. Possibly prevents RNA polymerase access to the promoters for lytic cell cycle transcription. This is Repressor protein (T6) from Halobacterium salinarum (Halobacterium halobium).